The following is a 567-amino-acid chain: Adenine deaminase 2 (567 aa).

It belongs to the metallo-dependent hydrolases superfamily. Adenine deaminase family. Requires Mn(2+) as cofactor.

It carries out the reaction adenine + H2O + H(+) = hypoxanthine + NH4(+). The sequence is that of Adenine deaminase 2 from Oenococcus oeni (strain ATCC BAA-331 / PSU-1).